The chain runs to 275 residues: MGNFRGHALPGTFFFIIGLWWCTKSILKYICKKQKRTCYLGSKTLFYRLEILEGITIVGMALTGMAGEQFIPGGPHLMLYDYKQGHWNQLLGWHHFTMYFFFGLLGVADILCFTISSLPVSLTKLMLSNALFVEAFIFYNHTHGREMLDIFVHQLLVLVVFLTGLVAFLEFLVRNNVLLELLRSSLILLQGSWFFQIGFVLYPPSGGPAWDLMDHENILFLTICFCWHYAVTIVIVGMNYAFITWLVKSRLKRLCSSEVGLLKNAEREQESEEEM.

The next 5 membrane-spanning stretches (helical) occupy residues 7-27 (HALPGTFFFIIGLWWCTKSIL), 51-71 (ILEGITIVGMALTGMAGEQFI), 100-120 (FFFGLLGVADILCFTISSLPV), 150-170 (IFVHQLLVLVVFLTGLVAFLE), and 218-238 (ILFLTICFCWHYAVTIVIVGM).

This sequence belongs to the TMEM45 family.

The protein resides in the membrane. The sequence is that of Transmembrane protein 45A (TMEM45A) from Homo sapiens (Human).